The chain runs to 302 residues: Lipoyl synthase (302 aa).

Positions 54, 59, 65, 80, 84, 87, and 291 each coordinate [4Fe-4S] cluster. One can recognise a Radical SAM core domain in the interval 66 to 280 (WSRKTATYML…RIYGKSIGFK (215 aa)).

Belongs to the radical SAM superfamily. Lipoyl synthase family. [4Fe-4S] cluster serves as cofactor.

Its subcellular location is the cytoplasm. The enzyme catalyses [[Fe-S] cluster scaffold protein carrying a second [4Fe-4S](2+) cluster] + N(6)-octanoyl-L-lysyl-[protein] + 2 oxidized [2Fe-2S]-[ferredoxin] + 2 S-adenosyl-L-methionine + 4 H(+) = [[Fe-S] cluster scaffold protein] + N(6)-[(R)-dihydrolipoyl]-L-lysyl-[protein] + 4 Fe(3+) + 2 hydrogen sulfide + 2 5'-deoxyadenosine + 2 L-methionine + 2 reduced [2Fe-2S]-[ferredoxin]. The protein operates within protein modification; protein lipoylation via endogenous pathway; protein N(6)-(lipoyl)lysine from octanoyl-[acyl-carrier-protein]: step 2/2. Functionally, catalyzes the radical-mediated insertion of two sulfur atoms into the C-6 and C-8 positions of the octanoyl moiety bound to the lipoyl domains of lipoate-dependent enzymes, thereby converting the octanoylated domains into lipoylated derivatives. The sequence is that of Lipoyl synthase from Leptospira borgpetersenii serovar Hardjo-bovis (strain JB197).